Reading from the N-terminus, the 420-residue chain is Glucose-1-phosphate adenylyltransferase (420 aa).

Alpha-D-glucose 1-phosphate is bound by residues tyrosine 107, glycine 173, 188 to 189 (EK), and serine 206.

It belongs to the bacterial/plant glucose-1-phosphate adenylyltransferase family. In terms of assembly, homotetramer.

It catalyses the reaction alpha-D-glucose 1-phosphate + ATP + H(+) = ADP-alpha-D-glucose + diphosphate. Its pathway is glycan biosynthesis; glycogen biosynthesis. In terms of biological role, involved in the biosynthesis of ADP-glucose, a building block required for the elongation reactions to produce glycogen. Catalyzes the reaction between ATP and alpha-D-glucose 1-phosphate (G1P) to produce pyrophosphate and ADP-Glc. The protein is Glucose-1-phosphate adenylyltransferase of Shewanella baltica (strain OS155 / ATCC BAA-1091).